We begin with the raw amino-acid sequence, 326 residues long: Alkanal monooxygenase beta chain (326 aa).

It belongs to the bacterial luciferase oxidoreductase family. As to quaternary structure, heterodimer of an alpha and a beta chain.

It carries out the reaction a long-chain fatty aldehyde + FMNH2 + O2 = a long-chain fatty acid + hnu + FMN + H2O + 2 H(+). Functionally, light-emitting reaction in luminous bacteria. The specific role of the beta subunit is unknown, but it is absolutely required for bioluminescence activity. The protein is Alkanal monooxygenase beta chain (luxB) of Aliivibrio fischeri (Vibrio fischeri).